Reading from the N-terminus, the 163-residue chain is Single-stranded DNA-binding protein 2 (163 aa).

The SSB domain maps to 1–104 (MINNVVLVGR…VVADNFQMLE (104 aa)). The tract at residues 109 to 163 (REGGSTGSFNGGFNNNTSSSNSYSAPAQQTPNFGRDDSPFGNSNPMDISDDDLPF) is disordered. Over residues 119-130 (GGFNNNTSSSNS) the composition is skewed to low complexity. Residues 131 to 140 (YSAPAQQTPN) show a composition bias toward polar residues. The Important for interaction with partner proteins motif lies at 158–163 (DDDLPF).

In terms of assembly, homotetramer.

In terms of biological role, plays an important role in DNA replication, recombination and repair. Binds to ssDNA and to an array of partner proteins to recruit them to their sites of action during DNA metabolism. This chain is Single-stranded DNA-binding protein 2 (ssb2), found in Streptococcus pyogenes serotype M18 (strain MGAS8232).